A 143-amino-acid chain; its full sequence is Large ribosomal subunit protein uL11 (143 aa).

It belongs to the universal ribosomal protein uL11 family. Part of the ribosomal stalk of the 50S ribosomal subunit. Interacts with L10 and the large rRNA to form the base of the stalk. L10 forms an elongated spine to which L12 dimers bind in a sequential fashion forming a multimeric L10(L12)X complex. One or more lysine residues are methylated.

Functionally, forms part of the ribosomal stalk which helps the ribosome interact with GTP-bound translation factors. In Pseudomonas fluorescens (strain Pf0-1), this protein is Large ribosomal subunit protein uL11.